Here is a 581-residue protein sequence, read N- to C-terminus: Colicin-E2 (581 aa).

Disordered regions lie at residues 1 to 74 (MSGG…SGGG), 242 to 269 (QTLSPGVTNNTDKDVRPAGFTQGGNTRD), 293 to 320 (PDQVKQRQDEENRRQQEWDATHPVEAAE), 421 to 488 (ADAA…IADK), and 513 to 566 (DLSK…MNNI). The span at 20–35 (INGGPTGLGVGGGASD) shows a compositional bias: gly residues. A compositionally biased stretch (low complexity) spans 36–45 (GSGWSSENNP). Over residues 46–74 (WGGGSGSGIHWGGGSGHGNGGGNGNSGGG) the composition is skewed to gly residues. A compositionally biased stretch (polar residues) spans 242-251 (QTLSPGVTNN). Basic and acidic residues-rich tracts occupy residues 296–320 (VKQRQDEENRRQQEWDATHPVEAAE), 429–452 (QERRKQKENKEKDAKDKLDKESKR), and 464–475 (PVGDKWLDDAGK). Over residues 518–527 (FKGSNKTNIQ) the composition is skewed to polar residues. Residues 535-554 (RKKDQVGGRERFELHHDKPI) show a composition bias toward basic and acidic residues. Zn(2+)-binding residues include His-549, His-574, and His-578.

Belongs to the colicin/pyosin nuclease family.

This plasmid-coded bactericidal protein is an endonuclease active on both single- and double-stranded DNA but with undefined specificity. Its function is as follows. Colicins are polypeptide toxins produced by and active against E.coli and closely related bacteria. The polypeptide is Colicin-E2 (col) (Escherichia coli).